A 260-amino-acid chain; its full sequence is Enoyl-[acyl-carrier-protein] reductase [NADH] FabI (260 aa).

NAD(+) contacts are provided by residues Gly15, 21–22 (SI), Gln42, 66–67 (DV), and Met94. Substrate is bound at residue Ala97. Residues Tyr147 and Tyr157 each act as proton acceptor in the active site. Residues Lys164 and 193–197 (IKTLA) contribute to the NAD(+) site.

It belongs to the short-chain dehydrogenases/reductases (SDR) family. FabI subfamily. In terms of assembly, homotetramer.

The enzyme catalyses a 2,3-saturated acyl-[ACP] + NAD(+) = a (2E)-enoyl-[ACP] + NADH + H(+). It functions in the pathway lipid metabolism; fatty acid biosynthesis. Its function is as follows. Catalyzes the reduction of a carbon-carbon double bond in an enoyl moiety that is covalently linked to an acyl carrier protein (ACP). Involved in the elongation cycle of fatty acid which are used in the lipid metabolism. This chain is Enoyl-[acyl-carrier-protein] reductase [NADH] FabI (fabI), found in Rickettsia felis (strain ATCC VR-1525 / URRWXCal2) (Rickettsia azadi).